A 113-amino-acid chain; its full sequence is Tyrosine-protein phosphatase 15 (113 aa).

One can recognise a Tyrosine-protein phosphatase domain in the interval 1–113 (WRMVYDNNVN…RSTGDGVALI (113 aa)).

It belongs to the protein-tyrosine phosphatase family.

The catalysed reaction is O-phospho-L-tyrosyl-[protein] + H2O = L-tyrosyl-[protein] + phosphate. In Styela plicata (Wrinkled sea squirt), this protein is Tyrosine-protein phosphatase 15 (STY-15).